We begin with the raw amino-acid sequence, 187 residues long: Ribosome-recycling factor (187 aa).

It belongs to the RRF family.

Its subcellular location is the cytoplasm. Functionally, responsible for the release of ribosomes from messenger RNA at the termination of protein biosynthesis. May increase the efficiency of translation by recycling ribosomes from one round of translation to another. This is Ribosome-recycling factor from Ruegeria sp. (strain TM1040) (Silicibacter sp.).